We begin with the raw amino-acid sequence, 87 residues long: Cell division protein ZapA (87 aa).

A coiled-coil region spans residues 64-87; the sequence is VHDYIKLKEEYDRLLQKLHKEKDE.

Belongs to the ZapA family. Type 2 subfamily. As to quaternary structure, homodimer. Interacts with FtsZ.

It is found in the cytoplasm. Activator of cell division through the inhibition of FtsZ GTPase activity, therefore promoting FtsZ assembly into bundles of protofilaments necessary for the formation of the division Z ring. It is recruited early at mid-cell but it is not essential for cell division. The polypeptide is Cell division protein ZapA (Geobacillus sp. (strain WCH70)).